Consider the following 64-residue polypeptide: Large ribosomal subunit protein bL35 (64 aa).

A compositionally biased stretch (basic residues) spans 1–14; the sequence is MKNKTHKGTAKRVK. Positions 1–30 are disordered; sequence MKNKTHKGTAKRVKVTGSGKLVREQANRRH. Basic and acidic residues predominate over residues 21 to 30; that stretch reads LVREQANRRH.

Belongs to the bacterial ribosomal protein bL35 family.

The sequence is that of Large ribosomal subunit protein bL35 from Corynebacterium efficiens (strain DSM 44549 / YS-314 / AJ 12310 / JCM 11189 / NBRC 100395).